Consider the following 373-residue polypeptide: Acyl-CoA dehydrogenase FadE27 (373 aa).

FAD contacts are provided by arginine 251, histidine 327, and glycine 331.

This sequence belongs to the acyl-CoA dehydrogenase family. Heterotetramer (dimer of heterodimers) composed of FadE26 and FadE27. It depends on FAD as a cofactor.

The catalysed reaction is (25S)-3-oxocholest-4-en-26-oyl-CoA + A = 3-oxo-cholest-4,24-dien-26-oyl-CoA + AH2. Its pathway is steroid metabolism; cholesterol degradation. With respect to regulation, uncompetitively inhibited by high concentration of 3-OCS-CoA. In terms of biological role, involved in the first cycle of side chain dehydrogenation in the beta-oxidation of cholesterol catabolism. It contributes partly to the virulence by increasing the efficiency of beta-oxidation. Catalyzes the dehydrogenation of acyl-CoA ester side chains of (25S)-3-oxo-cholest-4-en-26-oyl-CoA (3-OCS-CoA) to yield (24E)-3-oxo-cholest-4,24-dien-26-oyl-CoA. Also able to dehydrogenate steroyl-CoA such as 3-oxo-chol-4-en-24-oyl-CoA (3-OCO-CoA) as well as 3-oxo-4-pregnene-20-carboxyl-CoA (3-OPC-CoA). It dehydrogenates only (25S)-OCS-CoA diastereomer. The polypeptide is Acyl-CoA dehydrogenase FadE27 (fadE27) (Mycobacterium tuberculosis (strain ATCC 25618 / H37Rv)).